The chain runs to 159 residues: Probable histone H2A.5 (159 aa).

Gly residues predominate over residues 1 to 10; it reads MDAAGAGAGG. Disordered stretches follow at residues 1 to 29 and 136 to 159; these read MDAA…KKAV and EKAA…PKKA. Basic residues-rich tracts occupy residues 11-29 and 148-159; these read KLKK…KKAV and PKKAAGKSPKKA. 2 short sequence motifs (SPKK motif) span residues 147–150 and 155–158; these read SPKK.

It belongs to the histone H2A family. In terms of assembly, the nucleosome is a histone octamer containing two molecules each of H2A, H2B, H3 and H4 assembled in one H3-H4 heterotetramer and two H2A-H2B heterodimers. The octamer wraps approximately 147 bp of DNA.

It is found in the nucleus. The protein localises to the chromosome. Functionally, core component of nucleosome. Nucleosomes wrap and compact DNA into chromatin, limiting DNA accessibility to the cellular machineries which require DNA as a template. Histones thereby play a central role in transcription regulation, DNA repair, DNA replication and chromosomal stability. DNA accessibility is regulated via a complex set of post-translational modifications of histones, also called histone code, and nucleosome remodeling. In Oryza sativa subsp. indica (Rice), this protein is Probable histone H2A.5.